A 184-amino-acid chain; its full sequence is Photosystem I assembly protein Ycf4 (184 aa).

The next 2 membrane-spanning stretches (helical) occupy residues 22 to 42 (FCWACITSLGALGFFLVGIPS) and 64 to 84 (IVMCFYGIAGLFPSFYLWCTI).

This sequence belongs to the Ycf4 family.

Its subcellular location is the plastid. It is found in the chloroplast thylakoid membrane. In terms of biological role, seems to be required for the assembly of the photosystem I complex. The polypeptide is Photosystem I assembly protein Ycf4 (Huperzia lucidula (Shining clubmoss)).